The chain runs to 568 residues: Sulfite reductase [NADPH] hemoprotein beta-component (568 aa).

[4Fe-4S] cluster is bound by residues cysteine 426, cysteine 432, cysteine 471, and cysteine 475. Position 475 (cysteine 475) interacts with siroheme.

This sequence belongs to the nitrite and sulfite reductase 4Fe-4S domain family. In terms of assembly, alpha(8)-beta(8). The alpha component is a flavoprotein, the beta component is a hemoprotein. Siroheme is required as a cofactor. Requires [4Fe-4S] cluster as cofactor.

It catalyses the reaction hydrogen sulfide + 3 NADP(+) + 3 H2O = sulfite + 3 NADPH + 4 H(+). It participates in sulfur metabolism; hydrogen sulfide biosynthesis; hydrogen sulfide from sulfite (NADPH route): step 1/1. In terms of biological role, component of the sulfite reductase complex that catalyzes the 6-electron reduction of sulfite to sulfide. This is one of several activities required for the biosynthesis of L-cysteine from sulfate. This is Sulfite reductase [NADPH] hemoprotein beta-component from Xylella fastidiosa (strain 9a5c).